The primary structure comprises 618 residues: Chaperone protein DnaK (618 aa).

Phosphothreonine; by autocatalysis is present on Thr-175. The interval 576–618 is disordered; that stretch reads SQNAEPGADGGANSGANPGGTTGNTDTKDDNVVDAEYKVDDDK. The segment covering 583–597 has biased composition (gly residues); the sequence is ADGGANSGANPGGTT. The segment covering 601–618 has biased composition (basic and acidic residues); it reads DTKDDNVVDAEYKVDDDK.

Belongs to the heat shock protein 70 family.

Its function is as follows. Acts as a chaperone. In Clostridium kluyveri (strain NBRC 12016), this protein is Chaperone protein DnaK.